Here is a 77-residue protein sequence, read N- to C-terminus: MKLTCMMIVAVLFLTAWTFVTADDSGNGMEILFPKAGHEMENLEVSNRVKPCRKEGQLCDPIFQNCCRGWNCVLFCV.

A signal peptide spans 1–22; sequence MKLTCMMIVAVLFLTAWTFVTA. The propeptide occupies 23 to 48; the sequence is DDSGNGMEILFPKAGHEMENLEVSNR. Disulfide bonds link Cys52–Cys67, Cys59–Cys72, and Cys66–Cys76.

Belongs to the conotoxin O1 superfamily. Expressed by the venom duct.

It is found in the secreted. Delta-conotoxins bind to site 6 of voltage-gated sodium channels (Nav) and inhibit the inactivation process. This toxin shows weak activity on rNav1.2/SCN2A (EC(50)=2.5 uM) and rNav1.4/SCN4A (EC(50)=4.8 uM). In vivo, injection of this peptide in the head region of garden snail induces retraction of the head and body into shell. This is followed by secretion of viscous green slime and a convulsive undulation into and out of the shell. No apparent biological activity was observed when a much greater dose of peptide was injected intraperitoneally into mice. This Conus gloriamaris (Glory-of-the-Sea cone) protein is Delta-conotoxin GmVIA.